Consider the following 193-residue polypeptide: Ion-translocating oxidoreductase complex subunit A (193 aa).

A run of 6 helical transmembrane segments spans residues 5 to 25 (LLLF…FLGL), 39 to 59 (MGMG…AWLI), 63 to 83 (ILIP…VIAV), 102 to 122 (LLGI…VALL), 134 to 154 (ALYG…FAAI), and 171 to 191 (AIAL…NGLV).

It belongs to the NqrDE/RnfAE family. As to quaternary structure, the complex is composed of six subunits: RsxA, RsxB, RsxC, RsxD, RsxE and RsxG.

It is found in the cell inner membrane. In terms of biological role, part of a membrane-bound complex that couples electron transfer with translocation of ions across the membrane. Required to maintain the reduced state of SoxR. The protein is Ion-translocating oxidoreductase complex subunit A of Shigella sonnei (strain Ss046).